The sequence spans 261 residues: uncharacterized protein (261 aa).

A signal peptide spans 1 to 20 (MKIQVMLIIIFVGIFTICLA). N-linked (GlcNAc...) asparagine; by host glycosylation is found at Asn-22 and Asn-27.

The protein localises to the secreted. This is an uncharacterized protein from Acanthamoeba polyphaga (Amoeba).